The following is a 907-amino-acid chain: Putative pentatricopeptide repeat-containing protein At5g59900 (907 aa).

22 PPR repeats span residues 103-137, 155-185, 191-225, 226-260, 261-295, 296-330, 331-365, 366-400, 401-435, 436-470, 471-505, 506-540, 541-575, 576-610, 611-645, 646-680, 681-715, 716-750, 751-782, 786-820, 821-855, and 856-890; these read STASFCILIHALVKANLFWPASSLLQTLLLRALKP, SSSSFDLLIQHYVRSRRVLDGVLVFKMMITK, EVRTLSALLHGLVKFRHFGLAMELFNDMVSVGIRP, DVYIYTGVIRSLCELKDLSRAKEMIAHMEATGCDV, NIVPYNVLIDGLCKKQKVWEAVGIKKDLAGKDLKP, DVVTYCTLVYGLCKVQEFEIGLEMMDEMLCLRFSP, SEAAVSSLVEGLRKRGKIEEALNLVKRVVDFGVSP, NLFVYNALIDSLCKGRKFHEAELLFDRMGKIGLRP, NDVTYSILIDMFCRRGKLDTALSFLGEMVDTGLKL, SVYPYNSLINGHCKFGDISAAEGFMAEMINKKLEP, TVVTYTSLMGGYCSKGKINKALRLYHEMTGKGIAP, SIYTFTTLLSGLFRAGLIRDAVKLFNEMAEWNVKP, NRVTYNVMIEGYCEEGDMSKAFEFLKEMTEKGIVP, DTYSYRPLIHGLCLTGQASEAKVFVDGLHKGNCEL, NEICYTGLLHGFCREGKLEEALSVCQEMVQRGVDL, DLVCYGVLIDGSLKHKDRKLFFGLLKEMHDRGLKP, DDVIYTSMIDAKSKTGDFKEAFGIWDLMINEGCVP, NEVTYTAVINGLCKAGFVNEAEVLCSKMQPVSSVP, NQVTYGCFLDILTKGEVDMQKAVELHNAILKG, NTATYNMLIRGFCRQGRIEEASELITRMIGDGVSP, DCITYTTMINELCRRNDVKKAIELWNSMTEKGIRP, and DRVAYNTLIHGCCVAGEMGKATELRNEMLRQGLIP. The disordered stretch occupies residues 887 to 907; that stretch reads GLIPNNKTSRTTTSNDTSSKS. Over residues 891 to 907 the composition is skewed to low complexity; the sequence is NNKTSRTTTSNDTSSKS.

The protein belongs to the PPR family. P subfamily.

In Arabidopsis thaliana (Mouse-ear cress), this protein is Putative pentatricopeptide repeat-containing protein At5g59900.